A 496-amino-acid polypeptide reads, in one-letter code: Cytochrome P450 71D180 (496 aa).

A helical; Signal-anchor for type II membrane protein transmembrane segment spans residues 1–21 (MDISISWVVIIVFVLSYLILM). A heme-binding site is contributed by Cys-435.

It belongs to the cytochrome P450 family. Heme serves as cofactor. Mostly expressed in flowers and, to a lower extent, in leaves, especially in glandular trichomes.

The protein resides in the membrane. The catalysed reaction is (4R)-limonene + reduced [NADPH--hemoprotein reductase] + O2 = (1R,5S)-carveol + oxidized [NADPH--hemoprotein reductase] + H2O + H(+). It catalyses the reaction (4S)-limonene + reduced [NADPH--hemoprotein reductase] + O2 = (1S,5R)-carveol + oxidized [NADPH--hemoprotein reductase] + H2O + H(+). It carries out the reaction gamma-terpinene + 2 reduced [NADPH--hemoprotein reductase] + 2 O2 = carvacrol + 2 oxidized [NADPH--hemoprotein reductase] + 3 H2O + 2 H(+). It participates in secondary metabolite biosynthesis; terpenoid biosynthesis. In terms of biological role, involved in the biosynthesis of phenolic monoterpenes natural products thymol and carvacrol which have a broad range of biological activities acting as antimicrobial compounds, insecticides, antioxidants and pharmaceutical agents. Catalyzes the C2-hydroxylation of gamma-terpinene to produce carvacrol. Mediates also the C6-hydroxylation of (4S)-limonene and (4R)-limonene to form carveol. The sequence is that of Cytochrome P450 71D180 from Thymus vulgaris (Thyme).